Consider the following 247-residue polypeptide: ATP synthase subunit a, chloroplastic (247 aa).

5 consecutive transmembrane segments (helical) span residues Q38 to V58, V95 to L115, I134 to T154, L199 to L219, and G220 to G240.

Belongs to the ATPase A chain family. F-type ATPases have 2 components, CF(1) - the catalytic core - and CF(0) - the membrane proton channel. CF(1) has five subunits: alpha(3), beta(3), gamma(1), delta(1), epsilon(1). CF(0) has four main subunits: a, b, b' and c.

The protein resides in the plastid. It localises to the chloroplast thylakoid membrane. Its function is as follows. Key component of the proton channel; it plays a direct role in the translocation of protons across the membrane. The chain is ATP synthase subunit a, chloroplastic from Carica papaya (Papaya).